A 285-amino-acid chain; its full sequence is Glutamate racemase (285 aa).

Residues 28-29 and 60-61 contribute to the substrate site; these read DS and YG. Residue cysteine 92 is the Proton donor/acceptor of the active site. Residue 93 to 94 coordinates substrate; that stretch reads NT. UDP-N-acetyl-alpha-D-muramoyl-L-alanine is bound by residues arginine 104 and 113-119; that span reads GVVPAIK. The active-site Proton donor/acceptor is cysteine 204. 205–206 is a substrate binding site; that stretch reads TH.

It belongs to the aspartate/glutamate racemases family. As to quaternary structure, monomer.

The enzyme catalyses L-glutamate = D-glutamate. It participates in cell wall biogenesis; peptidoglycan biosynthesis. With respect to regulation, the low basal catalytic activity in increased 1000-fold in the presence of UDP-MurNAc-L-Ala, the product of the preceding enzyme in the peptidoglycan biosynthesis. Functionally, provides the (R)-glutamate required for cell wall biosynthesis. This is Glutamate racemase from Escherichia coli (strain K12).